We begin with the raw amino-acid sequence, 197 residues long: Nucleoside triphosphate pyrophosphatase (197 aa).

Asp-74 serves as the catalytic Proton acceptor.

The protein belongs to the Maf family. It depends on a divalent metal cation as a cofactor.

It localises to the cytoplasm. It carries out the reaction a ribonucleoside 5'-triphosphate + H2O = a ribonucleoside 5'-phosphate + diphosphate + H(+). The enzyme catalyses a 2'-deoxyribonucleoside 5'-triphosphate + H2O = a 2'-deoxyribonucleoside 5'-phosphate + diphosphate + H(+). In terms of biological role, nucleoside triphosphate pyrophosphatase. May have a dual role in cell division arrest and in preventing the incorporation of modified nucleotides into cellular nucleic acids. This is Nucleoside triphosphate pyrophosphatase from Granulibacter bethesdensis (strain ATCC BAA-1260 / CGDNIH1).